Reading from the N-terminus, the 509-residue chain is 2-isopropylmalate synthase (509 aa).

Positions 5-267 (IQIFDTTLRD…QTALNLEETK (263 aa)) constitute a Pyruvate carboxyltransferase domain. Positions 14, 202, 204, and 238 each coordinate Mn(2+). Positions 391 to 509 (KLETLQLQYV…AAENVEKVGN (119 aa)) are regulatory domain.

The protein belongs to the alpha-IPM synthase/homocitrate synthase family. LeuA type 1 subfamily. In terms of assembly, homodimer. Mn(2+) is required as a cofactor.

Its subcellular location is the cytoplasm. It carries out the reaction 3-methyl-2-oxobutanoate + acetyl-CoA + H2O = (2S)-2-isopropylmalate + CoA + H(+). The protein operates within amino-acid biosynthesis; L-leucine biosynthesis; L-leucine from 3-methyl-2-oxobutanoate: step 1/4. Catalyzes the condensation of the acetyl group of acetyl-CoA with 3-methyl-2-oxobutanoate (2-ketoisovalerate) to form 3-carboxy-3-hydroxy-4-methylpentanoate (2-isopropylmalate). The sequence is that of 2-isopropylmalate synthase from Staphylococcus aureus (strain MW2).